A 299-amino-acid chain; its full sequence is MLHSAHKGNEILVSLANAGVQRNGRWLVRGVEFSVSKGEIVTLIGPNGSGKSTSAKMAIGVAKPSEGKVSRKAGLRVGYVPQKLSVDWTMPLSVRRLMTLTGPLPAREIDAALNATGIAHLANAEVQHLSGGEFQRALLARAIARKPDLLVLDEPVQGVDFSGEIALYDLIKNIRNSNDCGILLISHDLHVVMAETDTVICLNGHVCCRGTPQAVSQSPEYMRLFGGTAAKALAVYSHHHDHTHLPDGRVQHADGTVTDHCHPEDGHHHDEDGECGCGHDHGEHGDHAPDGLRQGERHV.

Residues 13–228 form the ABC transporter domain; sequence VSLANAGVQR…PEYMRLFGGT (216 aa). 45-52 contacts ATP; the sequence is GPNGSGKS.

It belongs to the ABC transporter superfamily. Zinc importer (TC 3.A.1.15.5) family. In terms of assembly, the complex is composed of two ATP-binding proteins (ZnuC), two transmembrane proteins (ZnuB) and a solute-binding protein (ZnuA).

The protein resides in the cell inner membrane. The catalysed reaction is Zn(2+)(out) + ATP(in) + H2O(in) = Zn(2+)(in) + ADP(in) + phosphate(in) + H(+)(in). Its function is as follows. Part of the ABC transporter complex ZnuABC involved in zinc import. Responsible for energy coupling to the transport system. This Agrobacterium fabrum (strain C58 / ATCC 33970) (Agrobacterium tumefaciens (strain C58)) protein is Zinc import ATP-binding protein ZnuC.